A 100-amino-acid polypeptide reads, in one-letter code: Aspartyl/glutamyl-tRNA(Asn/Gln) amidotransferase subunit C (100 aa).

This sequence belongs to the GatC family. As to quaternary structure, heterotrimer of A, B and C subunits.

It carries out the reaction L-glutamyl-tRNA(Gln) + L-glutamine + ATP + H2O = L-glutaminyl-tRNA(Gln) + L-glutamate + ADP + phosphate + H(+). It catalyses the reaction L-aspartyl-tRNA(Asn) + L-glutamine + ATP + H2O = L-asparaginyl-tRNA(Asn) + L-glutamate + ADP + phosphate + 2 H(+). In terms of biological role, allows the formation of correctly charged Asn-tRNA(Asn) or Gln-tRNA(Gln) through the transamidation of misacylated Asp-tRNA(Asn) or Glu-tRNA(Gln) in organisms which lack either or both of asparaginyl-tRNA or glutaminyl-tRNA synthetases. The reaction takes place in the presence of glutamine and ATP through an activated phospho-Asp-tRNA(Asn) or phospho-Glu-tRNA(Gln). In Streptococcus sanguinis (strain SK36), this protein is Aspartyl/glutamyl-tRNA(Asn/Gln) amidotransferase subunit C.